The primary structure comprises 44 residues: MYIFSYEFRKIGGGSNRNNYQLNSAPAFKSSQNTSTQAKPTFSN.

Residues 22–44 (LNSAPAFKSSQNTSTQAKPTFSN) are disordered.

This is an uncharacterized protein from Dictyostelium discoideum (Social amoeba).